The primary structure comprises 612 residues: T-cell immunomodulatory protein (612 aa).

The N-terminal stretch at methionine 1–alanine 33 is a signal peptide. N-linked (GlcNAc...) asparagine glycosylation is found at asparagine 36, asparagine 95, asparagine 139, asparagine 146, asparagine 151, asparagine 176, asparagine 188, asparagine 226, and asparagine 243. An FG-GAP; atypical repeat occupies valine 258 to valine 293. N-linked (GlcNAc...) asparagine glycosylation is found at asparagine 353, asparagine 371, and asparagine 482. Residues valine 567–isoleucine 587 form a helical membrane-spanning segment.

The protein belongs to the TIP family. As to quaternary structure, interacts with RUVBL1, RUVBL2 and alpha-tubulin. Ubiquitously expressed.

It is found in the secreted. The protein localises to the membrane. Its function is as follows. Modulator of T-cell function. Has a protective effect in graft versus host disease model. In Homo sapiens (Human), this protein is T-cell immunomodulatory protein.